Consider the following 244-residue polypeptide: MDKTTHFGFKTVNEDDKAGRVAEVFHSVAKKYDVMNDLMSGGLHRIWKHFTLSTAGVRPGMKVLDIAGGTGDLARGWKKRVGKTGEVWLTDINSSMLTVGRDRLLDEGMILPVAIADAEKLPFPDSHFDLVSVAFGLRNMTHKDQALKEMCRVLKPGGKLLVLEFSKVWTPLKPVYDLYSFKALPLMGKLVARDADSYQYLAESIRMHPDQDTLKDMMLEAGFGKVDYHNLSAGVVALHKGYKL.

Residues T70, D91, and 117-118 contribute to the S-adenosyl-L-methionine site; that span reads DA.

Belongs to the class I-like SAM-binding methyltransferase superfamily. MenG/UbiE family.

It carries out the reaction a 2-demethylmenaquinol + S-adenosyl-L-methionine = a menaquinol + S-adenosyl-L-homocysteine + H(+). The enzyme catalyses a 2-methoxy-6-(all-trans-polyprenyl)benzene-1,4-diol + S-adenosyl-L-methionine = a 5-methoxy-2-methyl-3-(all-trans-polyprenyl)benzene-1,4-diol + S-adenosyl-L-homocysteine + H(+). It participates in quinol/quinone metabolism; menaquinone biosynthesis; menaquinol from 1,4-dihydroxy-2-naphthoate: step 2/2. It functions in the pathway cofactor biosynthesis; ubiquinone biosynthesis. In terms of biological role, methyltransferase required for the conversion of demethylmenaquinol (DMKH2) to menaquinol (MKH2) and the conversion of 2-polyprenyl-6-methoxy-1,4-benzoquinol (DDMQH2) to 2-polyprenyl-3-methyl-6-methoxy-1,4-benzoquinol (DMQH2). This Laribacter hongkongensis (strain HLHK9) protein is Ubiquinone/menaquinone biosynthesis C-methyltransferase UbiE.